The primary structure comprises 450 residues: Phosphoglucosamine mutase 2 (450 aa).

Ser-101 serves as the catalytic Phosphoserine intermediate. Residues Ser-101, Asp-245, Asp-247, and Asp-249 each coordinate Mg(2+). At Ser-101 the chain carries Phosphoserine.

It belongs to the phosphohexose mutase family. Mg(2+) serves as cofactor. Post-translationally, activated by phosphorylation.

It catalyses the reaction alpha-D-glucosamine 1-phosphate = D-glucosamine 6-phosphate. Catalyzes the conversion of glucosamine-6-phosphate to glucosamine-1-phosphate. This chain is Phosphoglucosamine mutase 2, found in Shewanella sp. (strain MR-4).